Consider the following 54-residue polypeptide: Small, acid-soluble spore protein gamma-type (54 aa).

A disordered region spans residues 1-54; the sequence is MAKKNRNKQQQEMQQQQQQHQAEFANEFAEGSSAEQARQQQQKAAGKRQKKNQQ. Composition is skewed to low complexity over residues 10 to 21 and 29 to 44; these read QQEMQQQQQQHQ and AEGSSAEQARQQQQKA. The segment covering 45 to 54 has biased composition (basic residues); that stretch reads AGKRQKKNQQ.

The protein belongs to the gamma-type SASP family.

Functionally, SASP are proteins degraded in the first minutes of spore germination and provide amino acids for both new protein synthesis and metabolism. These proteins may be involved in dormant spore's high resistance to UV light. The protein is Small, acid-soluble spore protein gamma-type (sspA) of Alkalihalophilus pseudofirmus (strain ATCC BAA-2126 / JCM 17055 / OF4) (Bacillus pseudofirmus).